The following is a 182-amino-acid chain: Neuropeptide CCHamide-1 (182 aa).

The first 22 residues, 1–22 (MWYSKCSWTLVVLVALFALVTG), serve as a signal peptide directing secretion. A disulfide bridge links C24 with C31. Residue H35 is modified to Histidine amide. Positions 39-182 (SGGKAVIDAK…ENYSGYELTK (144 aa)) are excised as a propeptide. Disordered regions lie at residues 67–103 (NNNN…AAPA) and 133–154 (QLQD…DAAA). A compositionally biased stretch (low complexity) spans 87-103 (RNTNANSANNIPLAAPA). Residue N174 is glycosylated (N-linked (GlcNAc...) asparagine).

In terms of tissue distribution, expressed in endocrine cells of the larval midgut (at protein level). In the brain, expressed in the optic lobes, lateral protocerebrum, subesophageal ganglion, and intermediate and superior medial protocerebrum (at protein level). Expressed in DN1a neurons but not in other clock neurons and expression follows a rhythmic pattern controlled by the circadian clock (at protein level). In the posterior midgut, expressed in enteroendocrine cells (at protein level). Low levels in larval brain with higher levels in larval and adult gut and adult brain.

The protein localises to the secreted. Neuropeptide ligand for the CCHamide-1 receptor CCHa1-R. Neuromessenger mediating signaling between neuronal cells of the circadian clock network involved in regulation of sleep latency (the time required to fall asleep), amount of sleep and depth of sleep (arousability). Together with PDF, involved in regulating intensity and periodicity of daytime activity. In subsets of clock neurons modulates the rhythmic expression of PDP1 and PDF, and together with PDF modulates the rhythmic expression of circadian protein PER/period, but not TIM/timeless. Mediates signaling from DN1a (anterior dorsal neurons 1) clock neurons to s-LNv (small ventral lateral neurons) clock neurons through CCHa1-R, contributing to regulation of activity rhythms by the circadian clock, particularly in the morning. May be involved in signaling between clock neurons and non-clock neurons, such as the fan-shaped body, involved in sleep homeostasis. In response to a high protein diet mediates hormonal signaling between the gut and a CCHa1-R expressing subset of dopaminergic cells in the protocerebral anterior medial (PAM) cluster of the brain. This suppresses arousability by mechano-sensory stimulation (but not thermal stimulation) but is not involved in regulation of sleep patterns. The polypeptide is Neuropeptide CCHamide-1 (Drosophila melanogaster (Fruit fly)).